The chain runs to 477 residues: PTS system glucose-specific EIICB component (477 aa).

The PTS EIIC type-1 domain occupies 1–388 (MFKNVFSSLQ…FNLKTPGREE (388 aa)). 9 helical membrane passes run 20–40 (VSVL…FTLI), 51–71 (TGGS…ALGF), 76–96 (GVAA…LSAV), 112–132 (NFSD…AYMF), 152–172 (FVPI…SLIW), 250–270 (LSGG…AIWH), 280–300 (IGSI…TEPI), 304–324 (FILV…LSFP), and 354–374 (IFLF…IFYF). The region spanning 399–477 (IEIAPYIVEA…TAIDEYINNI (79 aa)) is the PTS EIIB type-1 domain. The active-site Phosphocysteine intermediate; for EIIB activity is Cys421. A Phosphocysteine modification is found at Cys421.

It is found in the cell inner membrane. It catalyses the reaction N(pros)-phospho-L-histidyl-[protein] + D-glucose(out) = D-glucose 6-phosphate(in) + L-histidyl-[protein]. In terms of biological role, the phosphoenolpyruvate-dependent sugar phosphotransferase system (sugar PTS), a major carbohydrate active transport system, catalyzes the phosphorylation of incoming sugar substrates concomitantly with their translocation across the cell membrane. The enzyme II complex composed of PtsG and Crr is involved in glucose transport. This Buchnera aphidicola subsp. Schizaphis graminum (strain Sg) protein is PTS system glucose-specific EIICB component (ptsG).